Consider the following 542-residue polypeptide: MEVDDGYVEYVPVEERLAQMKRKVVEEPGKGMMEHLSDKKKLMSVGELARGITYTEPLSTWWKPPLHVRKMSTKQMDLIRKQWHITVNGEDIPPPIKNFMDMKFPSPLLRMLKDKGIMHPTPIQVQGLPVVLSGRDMIGIAFTGSGKTLVFVLPMIILALQEEIMMPIAAGEGPIALVICPSRELAKQTYDVVEQFVASLVEDGYPRLRSLLCIGGVDMRSQLDVVKKGVHIVVATPGRLKDILAKKKMSLDACRLLTLDEADRLVDLGFEDDIRHVFDHFKSQRQTLLFSATMPAKIQIFATSALVKPVTVNVGRAGAANLDVIQEVEYVKQEAKIVYLLECLQKTTPPVLIFCENKADVDDIHEYLLLKGVEAVAIHGGKDQEDRDYAISLFKAGKKDVLVATDVASKGLDFPDIQHVINYDMPGEIENYVHRIGRTGRCGKTGIATTFINKNQSEITLLDLKHLLQEAKQRIPPVLAELNGPMEETETIANASGVKGCAYCGGLGHRILQCPKFEHQKSVAISSSRKDHFGSDGYRGEV.

The Q motif motif lies at 97–125 (KNFMDMKFPSPLLRMLKDKGIMHPTPIQV). Residues 128–312 (LPVVLSGRDM…TSALVKPVTV (185 aa)) enclose the Helicase ATP-binding domain. 141-148 (AFTGSGKT) lines the ATP pocket. The DEAD box motif lies at 260 to 263 (DEAD). The region spanning 323–483 (DVIQEVEYVK…RIPPVLAELN (161 aa)) is the Helicase C-terminal domain. Residues 499–516 (KGCAYCGGLGHRILQCPK) form a CCHC-type zinc finger.

It belongs to the DEAD box helicase family. DDX41 subfamily.

It catalyses the reaction ATP + H2O = ADP + phosphate + H(+). The chain is Putative DEAD-box ATP-dependent RNA helicase 43 (RH43) from Arabidopsis thaliana (Mouse-ear cress).